A 600-amino-acid chain; its full sequence is Proline--tRNA ligase (600 aa).

Belongs to the class-II aminoacyl-tRNA synthetase family. ProS type 1 subfamily. In terms of assembly, homodimer.

Its subcellular location is the cytoplasm. The enzyme catalyses tRNA(Pro) + L-proline + ATP = L-prolyl-tRNA(Pro) + AMP + diphosphate. Its function is as follows. Catalyzes the attachment of proline to tRNA(Pro) in a two-step reaction: proline is first activated by ATP to form Pro-AMP and then transferred to the acceptor end of tRNA(Pro). As ProRS can inadvertently accommodate and process non-cognate amino acids such as alanine and cysteine, to avoid such errors it has two additional distinct editing activities against alanine. One activity is designated as 'pretransfer' editing and involves the tRNA(Pro)-independent hydrolysis of activated Ala-AMP. The other activity is designated 'posttransfer' editing and involves deacylation of mischarged Ala-tRNA(Pro). The misacylated Cys-tRNA(Pro) is not edited by ProRS. The sequence is that of Proline--tRNA ligase from Synechococcus sp. (strain ATCC 27144 / PCC 6301 / SAUG 1402/1) (Anacystis nidulans).